Reading from the N-terminus, the 101-residue chain is Translation initiation factor IF-1, chloroplastic (101 aa).

Residues 1–10 are compositionally biased toward polar residues; it reads MNQLKKSFSP. Positions 1-35 are disordered; that stretch reads MNQLKKSFSPTEGKKDQNNLINDPQKNKQKKQKKL. The S1-like domain occupies 26 to 101; that stretch reads KNKQKKQKKL…TKGRITYRHR (76 aa).

It belongs to the IF-1 family. Component of the 30S ribosomal translation pre-initiation complex which assembles on the 30S ribosome in the order IF-2 and IF-3, IF-1 and N-formylmethionyl-tRNA(fMet); mRNA recruitment can occur at any time during PIC assembly.

The protein localises to the plastid. Its subcellular location is the chloroplast. In terms of biological role, one of the essential components for the initiation of protein synthesis. Stabilizes the binding of IF-2 and IF-3 on the 30S subunit to which N-formylmethionyl-tRNA(fMet) subsequently binds. Helps modulate mRNA selection, yielding the 30S pre-initiation complex (PIC). Upon addition of the 50S ribosomal subunit IF-1, IF-2 and IF-3 are released leaving the mature 70S translation initiation complex. The chain is Translation initiation factor IF-1, chloroplastic from Tetradesmus obliquus (Green alga).